The sequence spans 285 residues: Probable endonuclease 4 (285 aa).

Zn(2+) is bound by residues His69, His109, Glu145, Asp179, His182, His216, Asp229, His231, and Glu261.

Belongs to the AP endonuclease 2 family. Zn(2+) is required as a cofactor.

The catalysed reaction is Endonucleolytic cleavage to 5'-phosphooligonucleotide end-products.. Endonuclease IV plays a role in DNA repair. It cleaves phosphodiester bonds at apurinic or apyrimidinic (AP) sites, generating a 3'-hydroxyl group and a 5'-terminal sugar phosphate. The polypeptide is Probable endonuclease 4 (Salmonella typhimurium (strain LT2 / SGSC1412 / ATCC 700720)).